Here is a 515-residue protein sequence, read N- to C-terminus: N-acetylglucosamine-1-phosphodiester alpha-N-acetylglucosaminidase (515 aa).

The first 25 residues, 1-25 (MATSTGRWLLLRLALFGFLWEASGG), serve as a signal peptide directing secretion. The propeptide at 26 to 49 (LDSGASRDDDLLLPYPRARARLPR) is removed in mature form. Over 50 to 448 (DCTRVRAGNR…AGELSFFTRT (399 aa)) the chain is Lumenal. Cystine bridges form between Cys115-Cys148, Cys132-Cys323, Cys307-Cys314, Cys362-Cys373, and Cys380-Cys389. N-linked (GlcNAc...) asparagine glycosylation is found at Asn208, Asn214, and Asn296. Positions 358-390 (DELDCGPSNCSQHGLCTETGCRCDAGWTGSNCS) constitute an EGF-like domain. N-linked (GlcNAc...) asparagine glycosylation is found at Asn366, Asn388, and Asn420. A helical membrane pass occupies residues 449 to 469 (AWLALTLALAFLLLISTAANL). At 470–515 (SLLLSRAERNRRLHGDYAYHPLQEMNGEPLAAEKEQPGGAHNPFKD) the chain is on the cytoplasmic side. The tract at residues 486-493 (YAYHPLQE) is mediates the interaction with AP4M1. Positions 488-491 (YHPL) match the Tyrosine-based internalization motif motif. Positions 511 to 515 (NPFKD) match the NPF internalization motif motif.

As to quaternary structure, homotetramer arranged as two disulfide-linked homodimers. Interacts with AP4M1. In terms of processing, the precursor is cleaved and activated in the trans-Golgi network by a furin endopeptidase. In terms of tissue distribution, isoform 2 may be brain-specific.

It is found in the golgi apparatus. The protein resides in the golgi stack membrane. The protein localises to the trans-Golgi network. The enzyme catalyses N(4)-[6-(N-acetyl-alpha-D-glucosaminyl-1-phospho)-alpha-D-mannosyl-(1-&gt;2)-alpha-D-mannosyl-(glycan)]-L-asparaginyl-[protein] + H2O = N(4)-[6-phospho-alpha-D-mannosyl-(1-&gt;2)-alpha-D-mannosyl-(glycan)]-L-asparaginyl-[protein] + N-acetyl-D-glucosamine + H(+). It participates in protein modification; protein glycosylation. Catalyzes the second step in the formation of the mannose 6-phosphate targeting signal on lysosomal enzyme oligosaccharides by removing GlcNAc residues from GlcNAc-alpha-P-mannose moieties, which are formed in the first step. Also hydrolyzes UDP-GlcNAc, a sugar donor for Golgi N-acetylglucosaminyltransferases. The sequence is that of N-acetylglucosamine-1-phosphodiester alpha-N-acetylglucosaminidase (NAGPA) from Homo sapiens (Human).